A 256-amino-acid polypeptide reads, in one-letter code: Small ribosomal subunit protein eS1 (256 aa).

Residues 1–18 show a composition bias toward basic residues; the sequence is MAVGKNKRLSKGKKGVKK. The segment at 1 to 20 is disordered; it reads MAVGKNKRLSKGKKGVKKRT. Alanine 2 is subject to N-acetylalanine; partial.

This sequence belongs to the eukaryotic ribosomal protein eS1 family. Component of the small ribosomal subunit. Mature ribosomes consist of a small (40S) and a large (60S) subunit. The 40S subunit contains about 33 different proteins and 1 molecule of RNA (18S). The 60S subunit contains about 49 different proteins and 3 molecules of RNA (25S, 5.8S and 5S).

Its subcellular location is the cytoplasm. This Aspergillus clavatus (strain ATCC 1007 / CBS 513.65 / DSM 816 / NCTC 3887 / NRRL 1 / QM 1276 / 107) protein is Small ribosomal subunit protein eS1 (rps1).